An 88-amino-acid chain; its full sequence is Small ribosomal subunit protein uS15 (88 aa).

The protein belongs to the universal ribosomal protein uS15 family. As to quaternary structure, part of the 30S ribosomal subunit. Forms a bridge to the 50S subunit in the 70S ribosome, contacting the 23S rRNA.

Its function is as follows. One of the primary rRNA binding proteins, it binds directly to 16S rRNA where it helps nucleate assembly of the platform of the 30S subunit by binding and bridging several RNA helices of the 16S rRNA. Functionally, forms an intersubunit bridge (bridge B4) with the 23S rRNA of the 50S subunit in the ribosome. This Geotalea daltonii (strain DSM 22248 / JCM 15807 / FRC-32) (Geobacter daltonii) protein is Small ribosomal subunit protein uS15.